Reading from the N-terminus, the 296-residue chain is Cytidine deaminase (296 aa).

CMP/dCMP-type deaminase domains lie at 52 to 167 (SPVE…YLPD) and 191 to 296 (QGHD…YISL). 93-95 (NQE) provides a ligand contact to substrate. Histidine 106 contacts Zn(2+). Glutamate 108 serves as the catalytic Proton donor. Zn(2+) is bound by residues cysteine 133 and cysteine 136.

It belongs to the cytidine and deoxycytidylate deaminase family. In terms of assembly, homodimer. The cofactor is Zn(2+).

The catalysed reaction is cytidine + H2O + H(+) = uridine + NH4(+). It carries out the reaction 2'-deoxycytidine + H2O + H(+) = 2'-deoxyuridine + NH4(+). Its function is as follows. This enzyme scavenges exogenous and endogenous cytidine and 2'-deoxycytidine for UMP synthesis. This is Cytidine deaminase from Mannheimia succiniciproducens (strain KCTC 0769BP / MBEL55E).